The sequence spans 557 residues: Formate--tetrahydrofolate ligase (557 aa).

Residue 66-73 (TPAGEGKT) participates in ATP binding.

Belongs to the formate--tetrahydrofolate ligase family.

The catalysed reaction is (6S)-5,6,7,8-tetrahydrofolate + formate + ATP = (6R)-10-formyltetrahydrofolate + ADP + phosphate. It participates in one-carbon metabolism; tetrahydrofolate interconversion. This Bartonella tribocorum (strain CIP 105476 / IBS 506) protein is Formate--tetrahydrofolate ligase.